Here is a 485-residue protein sequence, read N- to C-terminus: N-succinylglutamate 5-semialdehyde dehydrogenase (485 aa).

An NAD(+)-binding site is contributed by 220–225; it reads GSANTG. Active-site residues include glutamate 243 and cysteine 278.

This sequence belongs to the aldehyde dehydrogenase family. AstD subfamily.

The enzyme catalyses N-succinyl-L-glutamate 5-semialdehyde + NAD(+) + H2O = N-succinyl-L-glutamate + NADH + 2 H(+). It participates in amino-acid degradation; L-arginine degradation via AST pathway; L-glutamate and succinate from L-arginine: step 4/5. Functionally, catalyzes the NAD-dependent reduction of succinylglutamate semialdehyde into succinylglutamate. The protein is N-succinylglutamate 5-semialdehyde dehydrogenase of Vibrio campbellii (strain ATCC BAA-1116).